Here is a 488-residue protein sequence, read N- to C-terminus: Protein nucleotidyltransferase YdiU (488 aa).

ATP contacts are provided by Gly-91, Gly-93, Arg-94, Lys-114, Asp-126, Gly-127, Arg-177, and Arg-184. The active-site Proton acceptor is Asp-253. Mg(2+)-binding residues include Asn-254 and Asp-263. Asp-263 lines the ATP pocket.

The protein belongs to the SELO family. It depends on Mg(2+) as a cofactor. Requires Mn(2+) as cofactor.

It catalyses the reaction L-seryl-[protein] + ATP = 3-O-(5'-adenylyl)-L-seryl-[protein] + diphosphate. The enzyme catalyses L-threonyl-[protein] + ATP = 3-O-(5'-adenylyl)-L-threonyl-[protein] + diphosphate. The catalysed reaction is L-tyrosyl-[protein] + ATP = O-(5'-adenylyl)-L-tyrosyl-[protein] + diphosphate. It carries out the reaction L-histidyl-[protein] + UTP = N(tele)-(5'-uridylyl)-L-histidyl-[protein] + diphosphate. It catalyses the reaction L-seryl-[protein] + UTP = O-(5'-uridylyl)-L-seryl-[protein] + diphosphate. The enzyme catalyses L-tyrosyl-[protein] + UTP = O-(5'-uridylyl)-L-tyrosyl-[protein] + diphosphate. Nucleotidyltransferase involved in the post-translational modification of proteins. It can catalyze the addition of adenosine monophosphate (AMP) or uridine monophosphate (UMP) to a protein, resulting in modifications known as AMPylation and UMPylation. This chain is Protein nucleotidyltransferase YdiU, found in Bacillus cereus (strain G9842).